The chain runs to 781 residues: Protein translocase subunit SecA 2 (781 aa).

ATP-binding positions include glutamine 85, glycine 103–threonine 107, and aspartate 491.

It belongs to the SecA family. In terms of assembly, monomer and homodimer. Part of the essential Sec protein translocation apparatus which comprises SecA, SecYEG and auxiliary proteins SecDF. Other proteins may also be involved.

Its subcellular location is the cell membrane. The protein localises to the cytoplasm. The enzyme catalyses ATP + H2O + cellular proteinSide 1 = ADP + phosphate + cellular proteinSide 2.. Part of the Sec protein translocase complex. Interacts with the SecYEG preprotein conducting channel. Has a central role in coupling the hydrolysis of ATP to the transfer of proteins into and across the cell membrane, serving as an ATP-driven molecular motor driving the stepwise translocation of polypeptide chains across the membrane. The sequence is that of Protein translocase subunit SecA 2 from Clostridioides difficile (strain 630) (Peptoclostridium difficile).